The primary structure comprises 281 residues: Pantothenate synthetase (281 aa).

Met30–His37 is a binding site for ATP. The active-site Proton donor is His37. Gln60 lines the (R)-pantoate pocket. Gln60 serves as a coordination point for beta-alanine. Gly146–Asp149 is an ATP binding site. Gln152 lines the (R)-pantoate pocket. ATP-binding positions include Ile175 and Lys183 to Arg186.

This sequence belongs to the pantothenate synthetase family. As to quaternary structure, homodimer.

The protein resides in the cytoplasm. The catalysed reaction is (R)-pantoate + beta-alanine + ATP = (R)-pantothenate + AMP + diphosphate + H(+). It functions in the pathway cofactor biosynthesis; (R)-pantothenate biosynthesis; (R)-pantothenate from (R)-pantoate and beta-alanine: step 1/1. Its function is as follows. Catalyzes the condensation of pantoate with beta-alanine in an ATP-dependent reaction via a pantoyl-adenylate intermediate. In Ruminiclostridium cellulolyticum (strain ATCC 35319 / DSM 5812 / JCM 6584 / H10) (Clostridium cellulolyticum), this protein is Pantothenate synthetase.